A 235-amino-acid polypeptide reads, in one-letter code: C-&gt;U-editing enzyme APOBEC-1 (235 aa).

The region spanning 10–131 is the CMP/dCMP-type deaminase domain; that stretch reads GDATLRRRIK…MDQQHRQGLK (122 aa). His60 is a Zn(2+) binding site. The active-site Proton donor is Glu62. 2 residues coordinate Zn(2+): Cys92 and Cys95.

The protein belongs to the cytidine and deoxycytidylate deaminase family. Homodimer. Interacts with A1CF; form an mRNA editing complex. Interacts with RBM47; form an mRNA editing complex. Found in a complex with CELF2/CUGBP2 and A1CF. Interacts with HNRPAB. Interacts with SYNCRIP. Requires Zn(2+) as cofactor.

Its subcellular location is the cytoplasm. It localises to the nucleus. It catalyses the reaction a cytidine in mRNA + H2O + H(+) = a uridine in mRNA + NH4(+). The catalysed reaction is cytidine(6666) in apoB mRNA + H2O + H(+) = uridine(6666) in apoB mRNA + NH4(+). Its function is as follows. Cytidine deaminase catalyzing the cytidine to uridine postranscriptional editing of a variety of mRNAs. Form complexes with cofactors that confer differential editing activity and selectivity. Responsible for the postranscriptional editing of a CAA codon for Gln to a UAA codon for stop in the apolipoprotein B mRNA. Also involved in CGA (Arg) to UGA (Stop) editing in the NF1 mRNA. May also play a role in the epigenetic regulation of gene expression by participating in DNA demethylation. The chain is C-&gt;U-editing enzyme APOBEC-1 from Monodelphis domestica (Gray short-tailed opossum).